The primary structure comprises 507 residues: Maturase K (507 aa).

This sequence belongs to the intron maturase 2 family. MatK subfamily.

It localises to the plastid. The protein localises to the chloroplast. Usually encoded in the trnK tRNA gene intron. Probably assists in splicing its own and other chloroplast group II introns. The polypeptide is Maturase K (Araucaria heterophylla (Norfolk Island pine)).